Here is a 267-residue protein sequence, read N- to C-terminus: Tetrahydromethanopterin S-methyltransferase subunit C (267 aa).

7 consecutive transmembrane segments (helical) span residues 19-39 (IMAL…FAPP), 75-95 (IGML…SVGG), 97-117 (AGPI…GALA), 140-160 (TLVI…ASVV), 162-182 (YVVA…GILH), 198-218 (LMLA…ASSL), and 221-241 (GLMA…VAFS).

It belongs to the MtrC family. As to quaternary structure, the complex is composed of 8 subunits; MtrA, MtrB, MtrC, MtrD, MtrE, MtrF, MtrG and MtrH.

Its subcellular location is the cell membrane. It catalyses the reaction 5-methyl-5,6,7,8-tetrahydromethanopterin + coenzyme M + 2 Na(+)(in) = 5,6,7,8-tetrahydromethanopterin + methyl-coenzyme M + 2 Na(+)(out). The protein operates within one-carbon metabolism; methanogenesis from CO(2); methyl-coenzyme M from 5,10-methylene-5,6,7,8-tetrahydromethanopterin: step 2/2. In terms of biological role, part of a complex that catalyzes the formation of methyl-coenzyme M and tetrahydromethanopterin from coenzyme M and methyl-tetrahydromethanopterin. This is an energy-conserving, sodium-ion translocating step. The polypeptide is Tetrahydromethanopterin S-methyltransferase subunit C (Methanosarcina barkeri (strain Fusaro / DSM 804)).